A 262-amino-acid chain; its full sequence is Tetratricopeptide repeat protein 33 (262 aa).

TPR repeat units follow at residues 59-92 (SKQLKDEGASLAENKRYREAIQKWDEALQLTPND), 93-126 (ATLYEMKSQVLMSLHEMFPAVHAAEMAVQQNPHS), and 127-160 (WESWQTLGRAQLGLGEIILAIRSFQVALHIYPMN). The residue at position 197 (Ser197) is a Phosphoserine. Thr251 is modified (phosphothreonine).

The protein is Tetratricopeptide repeat protein 33 (TTC33) of Homo sapiens (Human).